Here is a 179-residue protein sequence, read N- to C-terminus: Large ribosomal subunit protein uL5 (179 aa).

The protein belongs to the universal ribosomal protein uL5 family. As to quaternary structure, part of the 50S ribosomal subunit; part of the 5S rRNA/L5/L18/L25 subcomplex. Contacts the 5S rRNA and the P site tRNA. Forms a bridge to the 30S subunit in the 70S ribosome.

In terms of biological role, this is one of the proteins that bind and probably mediate the attachment of the 5S RNA into the large ribosomal subunit, where it forms part of the central protuberance. In the 70S ribosome it contacts protein S13 of the 30S subunit (bridge B1b), connecting the 2 subunits; this bridge is implicated in subunit movement. Contacts the P site tRNA; the 5S rRNA and some of its associated proteins might help stabilize positioning of ribosome-bound tRNAs. The protein is Large ribosomal subunit protein uL5 of Chromohalobacter salexigens (strain ATCC BAA-138 / DSM 3043 / CIP 106854 / NCIMB 13768 / 1H11).